We begin with the raw amino-acid sequence, 567 residues long: 2-succinyl-5-enolpyruvyl-6-hydroxy-3-cyclohexene-1-carboxylate synthase (567 aa).

Belongs to the TPP enzyme family. MenD subfamily. Homodimer. Requires Mg(2+) as cofactor. Mn(2+) is required as a cofactor. The cofactor is thiamine diphosphate.

It carries out the reaction isochorismate + 2-oxoglutarate + H(+) = 5-enolpyruvoyl-6-hydroxy-2-succinyl-cyclohex-3-ene-1-carboxylate + CO2. The protein operates within quinol/quinone metabolism; 1,4-dihydroxy-2-naphthoate biosynthesis; 1,4-dihydroxy-2-naphthoate from chorismate: step 2/7. Its pathway is quinol/quinone metabolism; menaquinone biosynthesis. In terms of biological role, catalyzes the thiamine diphosphate-dependent decarboxylation of 2-oxoglutarate and the subsequent addition of the resulting succinic semialdehyde-thiamine pyrophosphate anion to isochorismate to yield 2-succinyl-5-enolpyruvyl-6-hydroxy-3-cyclohexene-1-carboxylate (SEPHCHC). The sequence is that of 2-succinyl-5-enolpyruvyl-6-hydroxy-3-cyclohexene-1-carboxylate synthase from Yersinia pseudotuberculosis serotype IB (strain PB1/+).